A 38-amino-acid chain; its full sequence is CMGYDIHCTDRLPCCFGLECVKTSGYWWYKKTYCRRKS.

3 disulfide bridges follow: Cys1/Cys15, Cys8/Cys20, and Cys14/Cys34. At Ser38 the chain carries Serine amide.

The protein belongs to the neurotoxin 14 (magi-1) family. 09 (magi-1) subfamily. Expressed by the venom gland.

The protein localises to the secreted. Its function is as follows. Insecticidal neurotoxin. Shows competition for site 3 of insect voltage-gated sodium channels (Nav). This Macrothele gigas (Japanese funnel web spider) protein is Mu-hexatoxin-Mg1b.